The primary structure comprises 85 residues: U4-theraphotoxin-Hhn1a (85 aa).

A signal peptide spans 1 to 22 (MKVTLIAILTCAAALVLHTTAA). Positions 23-48 (EELEAESQLMEVGMPDTELAAVDEER) are excised as a propeptide. Intrachain disulfides connect Cys-52-Cys-66, Cys-56-Cys-77, and Cys-71-Cys-82.

This sequence belongs to the neurotoxin 12 (Hwtx-2) family. 02 (Hwtx-2) subfamily. Monomer. Expressed by the venom gland.

It is found in the secreted. Its function is as follows. Neurotoxin active on both insects and mammals. This is U4-theraphotoxin-Hhn1a from Cyriopagopus hainanus (Chinese bird spider).